The primary structure comprises 37 residues: Mating pheromone Er-22 (37 aa).

3 disulfide bridges follow: cysteine 3-cysteine 18, cysteine 10-cysteine 32, and cysteine 15-cysteine 24.

The protein localises to the secreted. Its function is as follows. Mating ciliate pheromones (or gamones) are diffusible extracellular communication signals that distinguish different intraspecific classes of cells commonly referred to as 'mating types'. They prepare the latter for conjugation by changing their cell surface properties. This chain is Mating pheromone Er-22 (MAT22), found in Euplotes raikovi.